A 1654-amino-acid polypeptide reads, in one-letter code: Cortactin-binding protein 2 (1654 aa).

The tract at residues 1-31 is disordered; the sequence is MATDGASCEPDFSRSPEDAAGATAEPAKKEF. The stretch at 119-276 forms a coiled coil; it reads RKMQERMSTQ…EQLKRGSDSK (158 aa). Disordered regions lie at residues 361-432, 455-480, and 495-596; these read SHGD…LHSP, GNAN…PTSR, and QALS…PQGN. Over residues 368–379 the composition is skewed to low complexity; sequence SSVPAAPTPSAS. Composition is skewed to polar residues over residues 384–395 and 411–422; these read NGPSTGSAPDPT and QTPGTAAQSYSQ. Arg-499 carries the asymmetric dimethylarginine modification. Over residues 518 to 531 the composition is skewed to polar residues; sequence DVSSHTPVSRTSLK. ANK repeat units lie at residues 710 to 740, 744 to 773, 777 to 806, 810 to 839, 843 to 872, and 913 to 943; these read GRPT…DINY, DGHS…QVNA, NGFT…NINH, GGQT…DRSV, DGWT…PIPG, and EGWT…EPER. The segment at 1454-1478 is disordered; it reads GAWRKVSTSPRKKSGHFSSPVWNKP. Ser-1523 carries the post-translational modification Phosphoserine. Residues 1556-1654 form a disordered region; sequence RRLHSSGNNP…KEEIWNLRKK (99 aa). Positions 1581 to 1598 are enriched in polar residues; sequence KEVSPLSSHQTTECSNNK. Residues 1623 to 1637 are compositionally biased toward low complexity; it reads SQNTKRSSSSSNTRQ. A compositionally biased stretch (basic and acidic residues) spans 1644–1654; the sequence is SKEEIWNLRKK.

Interacts with CTTN/cortactin SH3 domain. Interacts with STRN, STRN4/zinedin and MOB4/phocein; this interactions mediate the association with the STRIPAK core complex and may regulate dendritic spine distribution of the STRIPAK complex in hippocampal neurons. Activation of glutamate receptors weakens the interaction with STRN and STRN4.

The protein resides in the cytoplasm. It is found in the cell cortex. Its subcellular location is the cell projection. It localises to the dendritic spine. Its function is as follows. Regulates the dendritic spine distribution of CTTN/cortactin in hippocampal neurons, and thus controls dendritic spinogenesis and dendritic spine maintenance. Associates with the striatin-interacting phosphatase and kinase (STRIPAK) core complex to regulate dendritic spine distribution of the STRIPAK complex in hippocampal neurons. The chain is Cortactin-binding protein 2 (CTTNBP2) from Atelerix albiventris (Middle-African hedgehog).